We begin with the raw amino-acid sequence, 657 residues long: DNA mismatch repair protein MutL (657 aa).

This sequence belongs to the DNA mismatch repair MutL/HexB family.

Its function is as follows. This protein is involved in the repair of mismatches in DNA. It is required for dam-dependent methyl-directed DNA mismatch repair. May act as a 'molecular matchmaker', a protein that promotes the formation of a stable complex between two or more DNA-binding proteins in an ATP-dependent manner without itself being part of a final effector complex. This chain is DNA mismatch repair protein MutL, found in Streptococcus agalactiae serotype Ia (strain ATCC 27591 / A909 / CDC SS700).